Reading from the N-terminus, the 143-residue chain is Ayaconin (143 aa).

The signal sequence occupies residues 1-22 (MSFLFFLVVLISIGLWVGPCVA).

As to quaternary structure, interacts with human F12 (inactive). Salivary gland.

The protein localises to the secreted. Functionally, inhibits the intrinsic blood coagulation pathway in the host by blocking activation of host coagulation factor XII (F12). The polypeptide is Ayaconin (Lutzomyia ayacuchensis (Sand fly)).